Reading from the N-terminus, the 73-residue chain is Conotoxin Cl9.2 (73 aa).

A signal peptide spans 1–18 (MSKLVILAVLVLLPLVTA). Residues 19-41 (EHGRDEQAMQPEKKTMWTLWSLT) constitute a propeptide that is removed on maturation. 3 disulfides stabilise this stretch: cysteine 46–cysteine 61, cysteine 52–cysteine 63, and cysteine 58–cysteine 72.

Expressed by the venom duct.

The protein localises to the secreted. The protein is Conotoxin Cl9.2 of Californiconus californicus (California cone).